We begin with the raw amino-acid sequence, 425 residues long: CBS domain-containing protein CBSX6 (425 aa).

Positions 16 to 90 (GKPEMVEFYE…FLAKTECLQE (75 aa)) constitute a CBS 1 domain. Residues 159–172 (SENSSSSSGLSADS) show a composition bias toward low complexity. The segment at 159 to 182 (SENSSSSSGLSADSTNRPTTSMTS) is disordered. The segment covering 173–182 (TNRPTTSMTS) has biased composition (polar residues). A run of 2 helical transmembrane segments spans residues 200–220 (IGVLGALAPLPLTSISTLGII) and 275–295 (YLAAAWALANLYAGQFVMGVE). The CBS 2 domain occupies 347–409 (MYRGRSAPLT…TAVTKQPSAF (63 aa)).

The protein resides in the vacuole membrane. This chain is CBS domain-containing protein CBSX6 (CBSX6), found in Arabidopsis thaliana (Mouse-ear cress).